The chain runs to 318 residues: Vomeronasal type-1 receptor A11 (318 aa).

The Extracellular segment spans residues 1 to 32; that stretch reads MSEILFFSPQPLFSHMMNKNSRLHTHSNIKNT. Residues 33–53 traverse the membrane as a helical segment; sequence FFSEIGIGISGNSFLLLFHIL. The Cytoplasmic portion of the chain corresponds to 54–65; that stretch reads KFIRGHRPRLTD. A helical transmembrane segment spans residues 66–86; the sequence is LPIGLLSLIHLLMLLLMAFIA. Residues 87 to 101 are Extracellular-facing; it reads TDIFISRRGWDGIIC. A disulfide bridge connects residues C101 and C188. Residues 102 to 118 traverse the membrane as a helical segment; the sequence is KFLVYLYGVLRGLSLCT. Residues 119–147 are Cytoplasmic-facing; it reads TSMLSVLQAIILSPRSSCLAKLKHKSPHH. Residues 148-168 form a helical membrane-spanning segment; the sequence is ISCAIIFLSVLYMLISSHILL. The Extracellular segment spans residues 169 to 206; sequence SITATPNLTMNDFLYVSQSCSLLPLSYLVQSMYSTLLA. N175 is a glycosylation site (N-linked (GlcNAc...) asparagine). Residues 207 to 227 form a helical membrane-spanning segment; it reads LREVFLISLMVLSTLYMVVLL. Over 228–254 the chain is Cytoplasmic; the sequence is CRHRKQAQHLQGTSLSPKASAEQRATQ. Residues 255-275 traverse the membrane as a helical segment; sequence TILMLMTFFVLMSIFDSIVSC. The Extracellular segment spans residues 276-285; it reads SRTMFLDDPT. Residues 286-306 traverse the membrane as a helical segment; that stretch reads SYSIHIFVMHIYATVSPFVFM. At 307–318 the chain is on the cytoplasmic side; it reads STEKHIVNILRG.

It belongs to the G-protein coupled receptor 1 family.

The protein localises to the cell membrane. Its function is as follows. Putative pheromone receptor implicated in the regulation of social and reproductive behavior. The sequence is that of Vomeronasal type-1 receptor A11 from Mus musculus (Mouse).